A 70-amino-acid polypeptide reads, in one-letter code: Conotoxin Ep11.12 (70 aa).

The N-terminal stretch at Met-1 to Ala-26 is a signal peptide. Disulfide bonds link Cys-27/Cys-41, Cys-34/Cys-46, Cys-40/Cys-50, and Cys-45/Cys-54. Position 57 is a proline amide (Pro-57). A propeptide spanning residues Ala-61–Arg-70 is cleaved from the precursor.

It belongs to the conotoxin I2 superfamily. Expressed by the venom duct.

The protein resides in the secreted. This Conus episcopatus (Bishop's cone) protein is Conotoxin Ep11.12.